Consider the following 425-residue polypeptide: Serine--tRNA ligase (425 aa).

L-serine is bound at residue 230 to 232 (TAE). 261-263 (RSE) is a binding site for ATP. Glu284 contacts L-serine. 348-351 (EISS) is a binding site for ATP. Ser384 is an L-serine binding site.

This sequence belongs to the class-II aminoacyl-tRNA synthetase family. Type-1 seryl-tRNA synthetase subfamily. In terms of assembly, homodimer. The tRNA molecule binds across the dimer.

It is found in the cytoplasm. It carries out the reaction tRNA(Ser) + L-serine + ATP = L-seryl-tRNA(Ser) + AMP + diphosphate + H(+). It catalyses the reaction tRNA(Sec) + L-serine + ATP = L-seryl-tRNA(Sec) + AMP + diphosphate + H(+). Its pathway is aminoacyl-tRNA biosynthesis; selenocysteinyl-tRNA(Sec) biosynthesis; L-seryl-tRNA(Sec) from L-serine and tRNA(Sec): step 1/1. Catalyzes the attachment of serine to tRNA(Ser). Is also able to aminoacylate tRNA(Sec) with serine, to form the misacylated tRNA L-seryl-tRNA(Sec), which will be further converted into selenocysteinyl-tRNA(Sec). In Streptococcus pyogenes serotype M5 (strain Manfredo), this protein is Serine--tRNA ligase.